Here is a 96-residue protein sequence, read N- to C-terminus: Co-chaperonin GroES (96 aa).

It belongs to the GroES chaperonin family. In terms of assembly, heptamer of 7 subunits arranged in a ring. Interacts with the chaperonin GroEL.

Its subcellular location is the cytoplasm. Its function is as follows. Together with the chaperonin GroEL, plays an essential role in assisting protein folding. The GroEL-GroES system forms a nano-cage that allows encapsulation of the non-native substrate proteins and provides a physical environment optimized to promote and accelerate protein folding. GroES binds to the apical surface of the GroEL ring, thereby capping the opening of the GroEL channel. This chain is Co-chaperonin GroES, found in Chromohalobacter salexigens (strain ATCC BAA-138 / DSM 3043 / CIP 106854 / NCIMB 13768 / 1H11).